Here is an 826-residue protein sequence, read N- to C-terminus: Putative ankyrin repeat protein RBE_0220 (826 aa).

ANK repeat units follow at residues 308–337 (LGTSLLAVTVRNNNVELTKALLNKGADQHA), 342–371 (IDMSLLYIACLNKSVDIAKLLLEYNVDPNY), 375–404 (DNDTPLLQACEKKSPELVKALLAKNADPNK), 445–474 (NDFTPLILACYNNSERVVQALLDKEADVNA), 478–507 (DGFTPLFAAYRNHSTKITELLLEKGANPDV), 512–541 (TKSSILYNACNEGDLNIIKLLLKHKANPNL), 545–574 (DGTTPLMAACEKGDLEIAALLLKNGADINK), and 578–607 (NGDNALFLACKNGNLELVKMLVENGVDLKK).

In Rickettsia bellii (strain RML369-C), this protein is Putative ankyrin repeat protein RBE_0220.